The sequence spans 115 residues: Large ribosomal subunit protein bL20c (115 aa).

It belongs to the bacterial ribosomal protein bL20 family.

The protein localises to the plastid. The protein resides in the chloroplast. Functionally, binds directly to 23S ribosomal RNA and is necessary for the in vitro assembly process of the 50S ribosomal subunit. It is not involved in the protein synthesizing functions of that subunit. This Pyropia yezoensis (Susabi-nori) protein is Large ribosomal subunit protein bL20c.